The following is a 374-amino-acid chain: Probable plastid-lipid-associated protein 3, chloroplastic (374 aa).

The transit peptide at 1 to 46 (MAMPPPLFAAASHASLLLPSPTIHSSTGSRRPFRLPLRSSRRPPVA) directs the protein to the chloroplast. A disordered region spans residues 19-148 (PSPTIHSSTG…EDNEEERREE (130 aa)). Low complexity predominate over residues 28–54 (GSRRPFRLPLRSSRRPPVAAAAASGVP). Pro residues-rich tracts occupy residues 64–73 (APEPPSQPDP) and 127–136 (PAPPPPPPPV).

Belongs to the PAP/fibrillin family.

Its subcellular location is the plastid. It is found in the chloroplast. This Oryza sativa subsp. japonica (Rice) protein is Probable plastid-lipid-associated protein 3, chloroplastic (PAP3).